Consider the following 778-residue polypeptide: pH-response regulator protein palH/prr-4 (778 aa).

The Extracellular segment spans residues 1–108 (MEPRQLFSDP…DPFYASTFPQ (108 aa)). A helical membrane pass occupies residues 109-129 (CYALAATTIIAYTLVIMLFIT). At 130 to 160 (PRSFLDGGVVVLGRKGFTNGGGGTSIGGRPW) the chain is on the periplasmic side. The chain crosses the membrane as a helical span at residues 161-181 (LQKVAALSVAISLTIANAATF). Residues 182 to 201 (RAAEQQYSWGVQNAKQLQED) lie on the Extracellular side of the membrane. A helical membrane pass occupies residues 202 to 222 (VLGGAELKIIRIISDTFLWLA). Over 223–237 (QAQTLIRLFPRQREK) the chain is Periplasmic. The helical transmembrane segment at 238-258 (VIIKWTAFALITLDVIFQSLN) threads the bilayer. The Extracellular portion of the chain corresponds to 259-275 (SFKYGGSDLTRPKFTEA). Residues 276–296 (VPALSYLFALALGVLYAAWVL) form a helical membrane-spanning segment. The Periplasmic portion of the chain corresponds to 297-314 (YYSIMKKRYAFYHPLMKN). A helical transmembrane segment spans residues 315 to 335 (MILVAVLSVVSILVPVVFFIL). Residues 336–341 (DISKPD) lie on the Extracellular side of the membrane. The helical transmembrane segment at 342-362 (FAGWGDYVRWVGAAAASVIVW) threads the bilayer. The Periplasmic portion of the chain corresponds to 363-778 (EWVERIEALE…RSDSSTTPSP (416 aa)). Disordered regions lie at residues 394-499 (ASQS…DTTS), 514-605 (ELTS…DENS), and 660-778 (ELNH…TPSP). A compositionally biased stretch (basic and acidic residues) spans 446 to 456 (HRTEPSSRNEP). Residues 457 to 466 (NEGSSPVAET) are compositionally biased toward polar residues. 2 stretches are compositionally biased toward basic and acidic residues: residues 588-605 (FVTR…DENS) and 661-675 (LNHS…EESR). Residues 720-732 (PIVTQGSFTNNRY) are compositionally biased toward polar residues. Residues 749–759 (ARAPSQPQSPS) are compositionally biased toward low complexity. Polar residues predominate over residues 769–778 (RSDSSTTPSP).

It belongs to the palH/RIM21 family.

The protein resides in the cell membrane. Required for the proteolytic cleavage of the transcription factor pacc-1 in response to alkaline ambient pH. The sequence is that of pH-response regulator protein palH/prr-4 (prr-4) from Neurospora crassa (strain ATCC 24698 / 74-OR23-1A / CBS 708.71 / DSM 1257 / FGSC 987).